Reading from the N-terminus, the 450-residue chain is Trigger factor (450 aa).

One can recognise a PPIase FKBP-type domain in the interval 163–249; sequence EDFVLIDYQG…LKEIQEQILP (87 aa). The segment covering 431–443 has biased composition (acidic residues); the sequence is PEVETEVSESAAD. The tract at residues 431 to 450 is disordered; sequence PEVETEVSESAADVEDKTDQ.

This sequence belongs to the FKBP-type PPIase family. Tig subfamily.

The protein resides in the cytoplasm. The catalysed reaction is [protein]-peptidylproline (omega=180) = [protein]-peptidylproline (omega=0). In terms of biological role, involved in protein export. Acts as a chaperone by maintaining the newly synthesized protein in an open conformation. Functions as a peptidyl-prolyl cis-trans isomerase. This Desulforapulum autotrophicum (strain ATCC 43914 / DSM 3382 / VKM B-1955 / HRM2) (Desulfobacterium autotrophicum) protein is Trigger factor.